A 641-amino-acid chain; its full sequence is Choline O-acetyltransferase (641 aa).

The interval 1-29 (MPILEKTPPKMAAKSPSSEEEPGLPKLPV) is disordered. Ser-17 bears the Phosphoserine mark. His-335 functions as the Proton acceptor in the catalytic mechanism. Ser-366 is subject to Phosphoserine. Residues 413–425 (GKTFIKQQKCSPD), Ser-451, and Gln-552 contribute to the CoA site. A disordered region spans residues 619 to 641 (QSGMGKPLATKEKVTRPSQVHQP).

The protein belongs to the carnitine/choline acetyltransferase family.

It catalyses the reaction choline + acetyl-CoA = acetylcholine + CoA. Functionally, catalyzes the reversible synthesis of acetylcholine (ACh) from acetyl CoA and choline at cholinergic synapses. The chain is Choline O-acetyltransferase (CHAT) from Sus scrofa (Pig).